Consider the following 154-residue polypeptide: MKTLSLKPSEIEKKWILIDADGLVLGRLASQIAMRLRGKHKPTYTPHMDCGDNVIVINAEKVKLTGNKRQDDIFYWHTGYPGGIKGRSKGQILDGRFPERVIIKAVERMVPRGPLGRRQMGNLRVYAGTAHPHEAQQPEVLDVAAMNPKNKRSA.

Belongs to the universal ribosomal protein uL13 family. As to quaternary structure, part of the 50S ribosomal subunit.

Its function is as follows. This protein is one of the early assembly proteins of the 50S ribosomal subunit, although it is not seen to bind rRNA by itself. It is important during the early stages of 50S assembly. In Rhodospirillum centenum (strain ATCC 51521 / SW), this protein is Large ribosomal subunit protein uL13.